Here is a 709-residue protein sequence, read N- to C-terminus: Kelch-like protein 11 (709 aa).

The N-terminal stretch at 1 to 15 is a signal peptide; it reads MAAAVAAAAAAAAAA. The 77-residue stretch at 95 to 171 folds into the BTB domain; the sequence is CDITLCFGGA…MYTGRIRVST (77 aa). Residues 206–308 form the BACK domain; sequence CVAIHSLAHM…KPTYLTRHVK (103 aa). 5 Kelch repeats span residues 361 to 408, 409 to 454, 456 to 502, 504 to 557, and 611 to 662; these read VIMV…ITES, YVYV…EVKG, LYSI…AIED, FVYI…VVNS, and DVFI…HVRI. Ser466 is subject to Phosphoserine.

Homodimer. Interacts with CUL3. Component of a cullin-RING-based BCR (BTB-CUL3-RBX1) E3 ubiquitin-protein ligase complex.

Its function is as follows. Component of a cullin-RING-based BCR (BTB-CUL3-RBX1) E3 ubiquitin-protein ligase complex that mediates the ubiquitination of target proteins, leading most often to their proteasomal degradation. This Mus musculus (Mouse) protein is Kelch-like protein 11 (Klhl11).